A 106-amino-acid polypeptide reads, in one-letter code: uncharacterized protein (106 aa).

It is found in the mitochondrion. This is an uncharacterized protein from Arabidopsis thaliana (Mouse-ear cress).